We begin with the raw amino-acid sequence, 434 residues long: Gamma-enolase (434 aa).

Serine 2 carries the N-acetylserine modification. The residue at position 5 (lysine 5) is an N6-acetyllysine. Threonine 26 carries the phosphothreonine modification. Serine 40 serves as a coordination point for Mg(2+). The residue at position 44 (tyrosine 44) is a Phosphotyrosine. Lysine 60 carries the N6-acetyllysine; alternate modification. Position 60 is an N6-succinyllysine; alternate (lysine 60). The residue at position 64 (lysine 64) is an N6-acetyllysine. N6-acetyllysine; alternate is present on lysine 89. Lysine 89 bears the N6-succinyllysine; alternate mark. Residues histidine 158 and glutamate 167 each contribute to the substrate site. N6-acetyllysine occurs at positions 193, 197, and 199. Lysine 202 is modified (N6-acetyllysine; alternate). A Glycyl lysine isopeptide (Lys-Gly) (interchain with G-Cter in SUMO2); alternate cross-link involves residue lysine 202. Catalysis depends on glutamate 210, which acts as the Proton donor. An N6-acetyllysine; alternate mark is found at lysine 228 and lysine 233. Lysine 228 bears the N6-succinyllysine; alternate mark. Lysine 233 bears the N6-(2-hydroxyisobutyryl)lysine; alternate mark. Aspartate 245 contacts Mg(2+). Position 256 is an N6-acetyllysine (lysine 256). Serine 263 bears the Phosphoserine mark. Tyrosine 287 is subject to Phosphotyrosine. Position 291 is a phosphoserine (serine 291). Glutamate 293 and aspartate 318 together coordinate Mg(2+). The substrate site is built by glutamate 293 and aspartate 318. N6-acetyllysine occurs at positions 335 and 343. The Proton acceptor role is filled by lysine 343. Substrate-binding positions include 370–373 (SHRS) and lysine 394. An N6-acetyllysine modification is found at lysine 406.

The protein belongs to the enolase family. As to quaternary structure, mammalian enolase is composed of 3 isozyme subunits, alpha, beta and gamma, which can form homodimers or heterodimers which are cell-type and development-specific. Requires Mg(2+) as cofactor. In terms of tissue distribution, the alpha/alpha homodimer is expressed in embryo and in most adult tissues. The alpha/beta heterodimer and the beta/beta homodimer are found in striated muscle, and the alpha/gamma heterodimer and the gamma/gamma homodimer in neurons.

The protein resides in the cytoplasm. Its subcellular location is the cell membrane. It catalyses the reaction (2R)-2-phosphoglycerate = phosphoenolpyruvate + H2O. It functions in the pathway carbohydrate degradation; glycolysis; pyruvate from D-glyceraldehyde 3-phosphate: step 4/5. Functionally, has neurotrophic and neuroprotective properties on a broad spectrum of central nervous system (CNS) neurons. Binds, in a calcium-dependent manner, to cultured neocortical neurons and promotes cell survival. The chain is Gamma-enolase (ENO2) from Homo sapiens (Human).